We begin with the raw amino-acid sequence, 370 residues long: Uroporphyrinogen decarboxylase (370 aa).

Residues 29–33 (RQAGR), D79, Y155, S210, and H342 each bind substrate.

Belongs to the uroporphyrinogen decarboxylase family. As to quaternary structure, homodimer.

Its subcellular location is the cytoplasm. The enzyme catalyses uroporphyrinogen III + 4 H(+) = coproporphyrinogen III + 4 CO2. Its pathway is porphyrin-containing compound metabolism; protoporphyrin-IX biosynthesis; coproporphyrinogen-III from 5-aminolevulinate: step 4/4. Functionally, catalyzes the decarboxylation of four acetate groups of uroporphyrinogen-III to yield coproporphyrinogen-III. The sequence is that of Uroporphyrinogen decarboxylase from Delftia acidovorans (strain DSM 14801 / SPH-1).